The sequence spans 1146 residues: Killer toxin subunits alpha/beta (1146 aa).

The N-terminal stretch at 1-17 is a signal peptide; that stretch reads MNIFYIFLFLLSFVQGL. A propeptide spanning residues 18–29 is cleaved from the precursor; it reads EHTHRRGSLVKR. 2 consecutive LysM domains span residues 205-234 and 254-303; these read ADQS…QPIC and KTYK…NLCV. The 57-residue stretch at 316–372 folds into the Chitin-binding type-1 domain; it reads IAECGPLAPGEKYNAKCPLNACCSEFGFCGLTKDYCDKKSSTTGAPGTDGCFSNCGY. Cystine bridges form between C319/C338, C332/C344, C337/C351, and C366/C370. Residues 383-735 form the GH18 domain; that stretch reads FKKIAYWLDA…DDTEDPFDEE (353 aa). Residues I424 and 447–450 each bind chitin; that span reads GGWD. The active-site Proton donor is E495. Residues Y496, 562 to 565, and W707 each bind chitin; that span reads MTYD. N-linked (GlcNAc...) asparagine glycans are attached at residues N771, N858, N868, N876, and N1117.

Belongs to the glycosyl hydrolase 18 family. As to quaternary structure, the killer toxin is composed of three subunits: alpha, beta and gamma. RF2 is potentially split by membrane-bound basic amino acid-specific peptidase to yield the alpha and beta subunits.

The enzyme catalyses Random endo-hydrolysis of N-acetyl-beta-D-glucosaminide (1-&gt;4)-beta-linkages in chitin and chitodextrins.. Functionally, the alpha subunit is a potent exochitinase. Along with the beta subunit it plays a role in the initial interaction of the toxin with sensitive cells and allow the gamma subunit (the active toxin) to gain entry into the cell. In Kluyveromyces lactis (strain ATCC 8585 / CBS 2359 / DSM 70799 / NBRC 1267 / NRRL Y-1140 / WM37) (Yeast), this protein is Killer toxin subunits alpha/beta.